Here is a 137-residue protein sequence, read N- to C-terminus: Outer membrane protein assembly factor BamE (137 aa).

An N-terminal signal peptide occupies residues 1–18 (MQVKTLLGATFLALSLAS). A lipid anchor (N-palmitoyl cysteine) is attached at Cys19. Cys19 is lipidated: S-diacylglycerol cysteine.

Belongs to the BamE family. As to quaternary structure, part of the Bam complex.

It localises to the cell outer membrane. Its function is as follows. Part of the outer membrane protein assembly complex, which is involved in assembly and insertion of beta-barrel proteins into the outer membrane. The sequence is that of Outer membrane protein assembly factor BamE from Haemophilus influenzae (strain ATCC 51907 / DSM 11121 / KW20 / Rd).